Consider the following 354-residue polypeptide: tRNA N6-adenosine threonylcarbamoyltransferase (354 aa).

A divalent metal cation contacts are provided by H121, H125, and Y142. Substrate is bound by residues 142 to 146 (YVSGG), D174, G189, E193, and N285. D313 lines the a divalent metal cation pocket.

Belongs to the KAE1 / TsaD family. Component of the EKC/KEOPS complex composed of at least bud32, cgi121, gon7, kae1 and pcc1; the whole complex dimerizes. The cofactor is a divalent metal cation.

The protein localises to the cytoplasm. It localises to the nucleus. It carries out the reaction L-threonylcarbamoyladenylate + adenosine(37) in tRNA = N(6)-L-threonylcarbamoyladenosine(37) in tRNA + AMP + H(+). In terms of biological role, component of the EKC/KEOPS complex that is required for the formation of a threonylcarbamoyl group on adenosine at position 37 (t(6)A37) in tRNAs that read codons beginning with adenine. The complex is probably involved in the transfer of the threonylcarbamoyl moiety of threonylcarbamoyl-AMP (TC-AMP) to the N6 group of A37. Kae1 likely plays a direct catalytic role in this reaction, but requires other protein(s) of the complex to fulfill this activity. The EKC/KEOPS complex also promotes both telomere uncapping and telomere elongation. The complex is required for efficient recruitment of transcriptional coactivators. This chain is tRNA N6-adenosine threonylcarbamoyltransferase (gpe-1), found in Neurospora crassa (strain ATCC 24698 / 74-OR23-1A / CBS 708.71 / DSM 1257 / FGSC 987).